The sequence spans 209 residues: HTLV-1 basic zipper factor (209 aa).

Residues 41–165 (EEEETVLDGL…KEKMQELGVD (125 aa)) form a disordered region. Composition is skewed to basic and acidic residues over residues 72–87 (PRGE…AEEK) and 94–160 (REKE…EKMQ). 3 consecutive short sequence motifs (nuclear localization signal) follow at residues 87–92 (KRKRKK), 116–120 (RRKRA), and 137–141 (RRERK).

It belongs to the HTLV-1 HBZ protein family. In terms of assembly, interacts with host ATF4; this interaction inhibits viral RNA transcriptional activation by preventing ATF4 binding to Tax-responsive elements. Interacts with host CREB1; this interaction inhibits host CREB1 transcriptional activity. Interacts with host JUN, JUNB and JUND. Interacts with host EP300 and CREBBP; these interactions inhibit the association of the coactivators with the viral promoter. Interacts with host UBR5; this interaction regulates HBZ protein stability. Interacts with XRCC5 and XRCC6. Interacts with IRF7 and IKBKE; this interaction modulates host interferon signaling. In terms of processing, ubiquitinated by host E3 ligase UBR5 leading to HBZ degradation.

The protein resides in the host nucleus. Enhances viral infectivity and persistence, and facilitates proliferation of HTLV-1-infected lymphocytes. Mechanistically, inhibits Tax-mediated viral replication and NF-kappa-B activation. Plays a role in allowing infected T-cells to escape the cytotoxic T-lymphocyte response by maintaining low levels of viral protein production. Also inhibits host EP300 histone acetyltransferase (HAT) activity, reducing levels of acetylated histone H3 at 'Lys-18' (H3K18ac) in infected cells. Contributes to the accumulation of chromosomal abnormalities by inhibiting double-stranded DNA breaks (DSB) repair through the NHEJ pathway. Participates in the modulation of host immune response at multiple levels contributing to abnormal interferon signaling and viral pathogenesis. The sequence is that of HTLV-1 basic zipper factor (HBZ) from Human T-cell leukemia virus 1 (isolate Caribbea HS-35 subtype A) (HTLV-1).